Reading from the N-terminus, the 252-residue chain is Large ribosomal subunit protein uL30 (252 aa).

The protein belongs to the universal ribosomal protein uL30 family.

Its function is as follows. Binds to G-rich structures in 28S rRNA and in mRNAs. Plays a regulatory role in the translation apparatus; inhibits cell-free translation of mRNAs. The polypeptide is Large ribosomal subunit protein uL30 (RpL7) (Drosophila melanogaster (Fruit fly)).